Here is a 379-residue protein sequence, read N- to C-terminus: Protein RecA (379 aa).

ATP is bound at residue 79–86 (GPESSGKT).

Belongs to the RecA family.

Its subcellular location is the cytoplasm. In terms of biological role, can catalyze the hydrolysis of ATP in the presence of single-stranded DNA, the ATP-dependent uptake of single-stranded DNA by duplex DNA, and the ATP-dependent hybridization of homologous single-stranded DNAs. It interacts with LexA causing its activation and leading to its autocatalytic cleavage. The sequence is that of Protein RecA from Streptococcus agalactiae.